A 537-amino-acid chain; its full sequence is Glucans biosynthesis protein D (537 aa).

The tat-type signal signal peptide spans 1-30 (MLMYRRDFLKSVTAAWVAFGLPNPLGGAFA).

The protein belongs to the OpgD/OpgG family. In terms of processing, predicted to be exported by the Tat system. The position of the signal peptide cleavage has not been experimentally proven.

The protein localises to the periplasm. The protein operates within glycan metabolism; osmoregulated periplasmic glucan (OPG) biosynthesis. Probably involved in the control of the structural glucose backbone of osmoregulated periplasmic glucans (OPGs). The sequence is that of Glucans biosynthesis protein D from Xylella fastidiosa (strain M12).